Reading from the N-terminus, the 264-residue chain is Thymidylate synthase (264 aa).

Arg-21 serves as a coordination point for dUMP. Position 51 (His-51) interacts with (6R)-5,10-methylene-5,6,7,8-tetrahydrofolate. 126–127 (RR) is a binding site for dUMP. The Nucleophile role is filled by Cys-146. Residues 166–169 (RSCD), Asn-177, and 207–209 (HLY) each bind dUMP. Residue Asp-169 participates in (6R)-5,10-methylene-5,6,7,8-tetrahydrofolate binding. Ala-263 contributes to the (6R)-5,10-methylene-5,6,7,8-tetrahydrofolate binding site.

The protein belongs to the thymidylate synthase family. Bacterial-type ThyA subfamily. Homodimer.

It localises to the cytoplasm. It catalyses the reaction dUMP + (6R)-5,10-methylene-5,6,7,8-tetrahydrofolate = 7,8-dihydrofolate + dTMP. It participates in pyrimidine metabolism; dTTP biosynthesis. Catalyzes the reductive methylation of 2'-deoxyuridine-5'-monophosphate (dUMP) to 2'-deoxythymidine-5'-monophosphate (dTMP) while utilizing 5,10-methylenetetrahydrofolate (mTHF) as the methyl donor and reductant in the reaction, yielding dihydrofolate (DHF) as a by-product. This enzymatic reaction provides an intracellular de novo source of dTMP, an essential precursor for DNA biosynthesis. The sequence is that of Thymidylate synthase from Shigella flexneri serotype 5b (strain 8401).